We begin with the raw amino-acid sequence, 319 residues long: Homeobox protein Hox-B5a (319 aa).

Residues 114 to 224 (SLLSPGSGDT…NTVGSEGQPP (111 aa)) are disordered. The segment covering 128–155 (RSSSPRSEQSGSGNLSSTNLSSSTNISS) has biased composition (low complexity). An Antp-type hexapeptide motif is present at residues 226–231 (IFPWMR). A DNA-binding region (homeobox) is located at residues 244–303 (GKRARTAYTRYQTLELEKEFHFNRYLTRRRRIEIAHALCLTERQIKIWFQNRRMKWKKDN).

It belongs to the Antp homeobox family.

Its subcellular location is the nucleus. Sequence-specific transcription factor which is part of a developmental regulatory system that provides cells with specific positional identities on the anterior-posterior axis. The polypeptide is Homeobox protein Hox-B5a (hoxb5a) (Takifugu rubripes (Japanese pufferfish)).